The primary structure comprises 291 residues: N-acetylmannosamine kinase (291 aa).

ATP is bound by residues 5–12 (AIDIGGTK) and 132–139 (GVGGGVVS). Zn(2+) is bound by residues histidine 156, cysteine 166, cysteine 168, and cysteine 173.

This sequence belongs to the ROK (NagC/XylR) family. NanK subfamily. As to quaternary structure, homodimer.

It catalyses the reaction an N-acyl-D-mannosamine + ATP = an N-acyl-D-mannosamine 6-phosphate + ADP + H(+). It participates in amino-sugar metabolism; N-acetylneuraminate degradation; D-fructose 6-phosphate from N-acetylneuraminate: step 2/5. In terms of biological role, catalyzes the phosphorylation of N-acetylmannosamine (ManNAc) to ManNAc-6-P. The chain is N-acetylmannosamine kinase from Escherichia coli O9:H4 (strain HS).